A 300-amino-acid polypeptide reads, in one-letter code: Tyrosine recombinase XerC (300 aa).

The Core-binding (CB) domain maps to 2–88; the sequence is TQEGKLEQQF…SLRSFYTFLL (87 aa). Residues 109-294 form the Tyr recombinase domain; that stretch reads RLPKFFYSEE…TKEHLKSTYM (186 aa). Catalysis depends on residues Arg150, Lys174, His246, Arg249, and His272. Tyr281 functions as the O-(3'-phospho-DNA)-tyrosine intermediate in the catalytic mechanism.

The protein belongs to the 'phage' integrase family. XerC subfamily. As to quaternary structure, forms a cyclic heterotetrameric complex composed of two molecules of XerC and two molecules of XerD.

Its subcellular location is the cytoplasm. In terms of biological role, site-specific tyrosine recombinase, which acts by catalyzing the cutting and rejoining of the recombining DNA molecules. The XerC-XerD complex is essential to convert dimers of the bacterial chromosome into monomers to permit their segregation at cell division. It also contributes to the segregational stability of plasmids. This Listeria welshimeri serovar 6b (strain ATCC 35897 / DSM 20650 / CCUG 15529 / CIP 8149 / NCTC 11857 / SLCC 5334 / V8) protein is Tyrosine recombinase XerC.